The chain runs to 496 residues: Amidophosphoribosyltransferase (496 aa).

Residues 1-21 (MNQSHSFPTDDPLDGDTLHEE) constitute a propeptide that is removed on maturation. The active-site Nucleophile is the C22. Residues 22-241 (CGVFGILGHP…NGEVIICEIQ (220 aa)) form the Glutamine amidotransferase type-2 domain.

In the C-terminal section; belongs to the purine/pyrimidine phosphoribosyltransferase family.

It catalyses the reaction 5-phospho-beta-D-ribosylamine + L-glutamate + diphosphate = 5-phospho-alpha-D-ribose 1-diphosphate + L-glutamine + H2O. It participates in purine metabolism; IMP biosynthesis via de novo pathway; N(1)-(5-phospho-D-ribosyl)glycinamide from 5-phospho-alpha-D-ribose 1-diphosphate: step 1/2. In terms of biological role, catalyzes the formation of phosphoribosylamine from phosphoribosylpyrophosphate (PRPP) and glutamine. The protein is Amidophosphoribosyltransferase of Rhizobium etli (strain ATCC 51251 / DSM 11541 / JCM 21823 / NBRC 15573 / CFN 42).